Consider the following 198-residue polypeptide: Recombination protein RecR (198 aa).

The C4-type zinc finger occupies 57-72 (CRQCRTLSEEELCPQC). The region spanning 80–174 (SLLCVVEGPL…TLSRIAHGVP (95 aa)) is the Toprim domain.

Belongs to the RecR family.

May play a role in DNA repair. It seems to be involved in an RecBC-independent recombinational process of DNA repair. It may act with RecF and RecO. The chain is Recombination protein RecR from Pseudomonas paraeruginosa (strain DSM 24068 / PA7) (Pseudomonas aeruginosa (strain PA7)).